Consider the following 372-residue polypeptide: 4-hydroxy-3-methylbut-2-en-1-yl diphosphate synthase (flavodoxin) (372 aa).

Residues Cys270, Cys273, Cys305, and Glu312 each coordinate [4Fe-4S] cluster.

Belongs to the IspG family. [4Fe-4S] cluster is required as a cofactor.

The enzyme catalyses (2E)-4-hydroxy-3-methylbut-2-enyl diphosphate + oxidized [flavodoxin] + H2O + 2 H(+) = 2-C-methyl-D-erythritol 2,4-cyclic diphosphate + reduced [flavodoxin]. Its pathway is isoprenoid biosynthesis; isopentenyl diphosphate biosynthesis via DXP pathway; isopentenyl diphosphate from 1-deoxy-D-xylulose 5-phosphate: step 5/6. Functionally, converts 2C-methyl-D-erythritol 2,4-cyclodiphosphate (ME-2,4cPP) into 1-hydroxy-2-methyl-2-(E)-butenyl 4-diphosphate. This chain is 4-hydroxy-3-methylbut-2-en-1-yl diphosphate synthase (flavodoxin), found in Shigella boydii serotype 18 (strain CDC 3083-94 / BS512).